The primary structure comprises 269 residues: 3-methyl-2-oxobutanoate hydroxymethyltransferase (269 aa).

Asp-46 and Asp-85 together coordinate Mg(2+). Residues 46–47 (DS), Asp-85, and Lys-114 contribute to the 3-methyl-2-oxobutanoate site. Glu-116 provides a ligand contact to Mg(2+). Catalysis depends on Glu-183, which acts as the Proton acceptor.

The protein belongs to the PanB family. As to quaternary structure, homodecamer; pentamer of dimers. It depends on Mg(2+) as a cofactor.

The protein localises to the cytoplasm. It carries out the reaction 3-methyl-2-oxobutanoate + (6R)-5,10-methylene-5,6,7,8-tetrahydrofolate + H2O = 2-dehydropantoate + (6S)-5,6,7,8-tetrahydrofolate. Its pathway is cofactor biosynthesis; (R)-pantothenate biosynthesis; (R)-pantoate from 3-methyl-2-oxobutanoate: step 1/2. Catalyzes the reversible reaction in which hydroxymethyl group from 5,10-methylenetetrahydrofolate is transferred onto alpha-ketoisovalerate to form ketopantoate. The chain is 3-methyl-2-oxobutanoate hydroxymethyltransferase from Methylococcus capsulatus (strain ATCC 33009 / NCIMB 11132 / Bath).